The following is a 398-amino-acid chain: MAKMTVKDLDLKGKKVLVRVDFNVPLKDGVITNDNRISAALPTIKYIIENGGRAILFSHLGRVKEEADKEGKSLAPVAKDLSAKLGTEVVFPGVTRGAELEEAINALEDGQVLLVENTRFEDVDGKKESKNDPELGKYWASLGDGIFVNDAFGTAHRAHASNVGISANVDKAVAGFLLENEIAYIKEAVEKPERPFVAILGGSKVSDKIGVIENLLEKADKVLIGGGMTYTFYKAQGIEIGNSLVEEDKLDIAKELLEKSNGKLILPVDSKEANAFADYTEVRDTEGEAVSEGFLGLDIGPKSIAKFEEALEGAKTVVWNGPMGVFENPDFQAGTIGVMDAIVKQPGVKSIIGGGDSAAAAINLGRADKFSWISTGGGASMELLEGKELPGLSALTEK.

Substrate is bound by residues Asp21–Asn23, Arg36, His59–Arg62, Arg119, and Arg157. ATP contacts are provided by residues Lys208, Gly296, Glu327, and Gly354–Ser357.

Belongs to the phosphoglycerate kinase family. As to quaternary structure, monomer.

It localises to the cytoplasm. It carries out the reaction (2R)-3-phosphoglycerate + ATP = (2R)-3-phospho-glyceroyl phosphate + ADP. It participates in carbohydrate degradation; glycolysis; pyruvate from D-glyceraldehyde 3-phosphate: step 2/5. This is Phosphoglycerate kinase from Streptococcus uberis (strain ATCC BAA-854 / 0140J).